The primary structure comprises 294 residues: 4-hydroxy-tetrahydrodipicolinate synthase (294 aa).

Residue Thr44 participates in pyruvate binding. Tyr132 (proton donor/acceptor) is an active-site residue. Catalysis depends on Lys160, which acts as the Schiff-base intermediate with substrate. Val202 serves as a coordination point for pyruvate.

Belongs to the DapA family. As to quaternary structure, homotetramer; dimer of dimers.

The protein localises to the cytoplasm. It catalyses the reaction L-aspartate 4-semialdehyde + pyruvate = (2S,4S)-4-hydroxy-2,3,4,5-tetrahydrodipicolinate + H2O + H(+). Its pathway is amino-acid biosynthesis; L-lysine biosynthesis via DAP pathway; (S)-tetrahydrodipicolinate from L-aspartate: step 3/4. Its function is as follows. Catalyzes the condensation of (S)-aspartate-beta-semialdehyde [(S)-ASA] and pyruvate to 4-hydroxy-tetrahydrodipicolinate (HTPA). This is 4-hydroxy-tetrahydrodipicolinate synthase from Leptospira biflexa serovar Patoc (strain Patoc 1 / Ames).